A 524-amino-acid chain; its full sequence is MVAKDYPFYLTVKRANCSLEAPLGSGVAKDEEPSNKRVKPLSRVTSLANLIPPVKTTPLKRFSQTLQRSISFRSESRPDILAPRAWSRNATSSSTKRRDSKLWSETFDVCVNQVLTAKEIKRQEAIFELSQGEEDLIEDLKLAKKAYHDPMLKLSIMTEQELNQIFGTLDSLIPLHEELLSQLRDVRKPDGSTEHVGPILVGWLPCLSSYDSYCSNQVAAKALLDHKKQDHRVQDFLQRCLESPFSRKLDLWNFLDIPRSRLVKYPLLLREILRHTPNDNPDQQHLEEAINIIQGIVAEINTKTGESECRYYKERLLYLEEGQKDSLIDSSRVLCCHGELKNNRGVKLHVFLFQEVLVITRAVTHNEQLCYQLYRQPIPVKDLTLEDLQDGEVRLGGSLRGAFSNNERVKNFFRVSFKNGSQSQTHSLQANDTFNKQQWLNCIRQAKETVLSAAGQAGLLDSEGLVQGPGTENREPQGETKLEQMDQSDSESDCSMDTSEVSLECERMEQTDASCANSRPEESV.

Phosphoserine occurs at positions 46 and 69. In terms of domain architecture, DH spans 121-303 (KRQEAIFELS…QGIVAEINTK (183 aa)). The PH domain occupies 290 to 448 (INIIQGIVAE…WLNCIRQAKE (159 aa)). The segment at 461–524 (DSEGLVQGPG…CANSRPEESV (64 aa)) is disordered. The segment covering 472 to 484 (ENREPQGETKLEQ) has biased composition (basic and acidic residues).

Interacts with RHOA and RHOB.

Its subcellular location is the cytoplasm. Functionally, acts as a guanine nucleotide exchange factor (GEF) for RhoA and RhoB GTPases. This Mus musculus (Mouse) protein is Rho guanine nucleotide exchange factor 3 (Arhgef3).